A 389-amino-acid chain; its full sequence is S-adenosylmethionine synthase (389 aa).

His19 is a binding site for ATP. Asp21 lines the Mg(2+) pocket. Residue Glu47 participates in K(+) binding. Residues Glu60 and Gln103 each coordinate L-methionine. Residues Gln103 to Arg113 are flexible loop. Residues Asp168–Lys170, Arg234–Phe235, Asp243, Arg249–Lys250, Ala266, and Lys270 contribute to the ATP site. Asp243 contacts L-methionine. Lys274 contributes to the L-methionine binding site.

This sequence belongs to the AdoMet synthase family. As to quaternary structure, homotetramer; dimer of dimers. The cofactor is Mg(2+). K(+) is required as a cofactor.

The protein localises to the cytoplasm. The catalysed reaction is L-methionine + ATP + H2O = S-adenosyl-L-methionine + phosphate + diphosphate. The protein operates within amino-acid biosynthesis; S-adenosyl-L-methionine biosynthesis; S-adenosyl-L-methionine from L-methionine: step 1/1. Its function is as follows. Catalyzes the formation of S-adenosylmethionine (AdoMet) from methionine and ATP. The overall synthetic reaction is composed of two sequential steps, AdoMet formation and the subsequent tripolyphosphate hydrolysis which occurs prior to release of AdoMet from the enzyme. This Nitratidesulfovibrio vulgaris (strain DSM 19637 / Miyazaki F) (Desulfovibrio vulgaris) protein is S-adenosylmethionine synthase.